Reading from the N-terminus, the 685-residue chain is DNA topoisomerase 4 subunit B (685 aa).

A compositionally biased stretch (basic and acidic residues) spans 389–400 (EAARKAREESRN). The segment at 389-427 (EAARKAREESRNGKKRKKGESLLSGKLTPAQSRNPKKNE) is disordered. The Toprim domain maps to 426–540 (NELYLVEGDS…AGKVYIALPP (115 aa)). The Mg(2+) site is built by Glu432, Asp505, and Asp507. Composition is skewed to acidic residues over residues 644 to 654 (GSILDRSEEDT) and 673 to 685 (QTDD…FDIE). Positions 644 to 685 (GSILDRSEEDTSAPTGESLLDAEKTKEAEQTDDTEISLFDIE) are disordered.

The protein belongs to the type II topoisomerase family. ParE type 1 subfamily. As to quaternary structure, heterotetramer composed of ParC and ParE. It depends on Mg(2+) as a cofactor. Requires Mn(2+) as cofactor. Ca(2+) is required as a cofactor.

It carries out the reaction ATP-dependent breakage, passage and rejoining of double-stranded DNA.. Its activity is regulated as follows. Pyrrolopyrimidines inhibit both GyrB and its paralog in topoisomerase IV (parE). Its function is as follows. Topoisomerase IV is essential for chromosome segregation. It relaxes supercoiled DNA. Performs the decatenation events required during the replication of a circular DNA molecule. This Enterococcus faecalis (strain ATCC 700802 / V583) protein is DNA topoisomerase 4 subunit B.